Reading from the N-terminus, the 183-residue chain is Large ribosomal subunit protein uL6 (183 aa).

This sequence belongs to the universal ribosomal protein uL6 family. Part of the 50S ribosomal subunit.

Its function is as follows. This protein binds to the 23S rRNA, and is important in its secondary structure. It is located near the subunit interface in the base of the L7/L12 stalk, and near the tRNA binding site of the peptidyltransferase center. The sequence is that of Large ribosomal subunit protein uL6 from Chlamydia trachomatis serovar D (strain ATCC VR-885 / DSM 19411 / UW-3/Cx).